The sequence spans 47 residues: Large ribosomal subunit protein bL33 (47 aa).

The protein belongs to the bacterial ribosomal protein bL33 family.

In Staphylococcus capitis, this protein is Large ribosomal subunit protein bL33.